A 580-amino-acid polypeptide reads, in one-letter code: TRAF-type zinc finger domain-containing protein 1 (580 aa).

At Ala-2 the chain carries N-acetylalanine. A TRAF-type zinc finger spans residues 27-103; it reads IHEIHCQRNI…DLELSVVKLK (77 aa). Phosphoserine occurs at positions 278, 320, 326, 327, 409, 415, 430, 450, 469, and 532. 3 disordered regions span residues 395-453, 468-509, and 524-580; these read TANH…SPNR, PSGP…ASGH, and FAPS…EEEE. Residues 407-417 show a composition bias toward polar residues; sequence QDSQPENTSAE.

As to quaternary structure, interacts with MAVS, TICAM1, TRAF1, TRAF2, TRAF3 and TRAF6. As to expression, expressed in skeletal muscle, brain, liver, kidney, spleen and bone marrow. Expression depends on STAT1.

Functionally, negative feedback regulator that controls excessive innate immune responses. Regulates both Toll-like receptor 4 (TLR4) and DDX58/RIG1-like helicases (RLH) pathways. May inhibit the LTR pathway by direct interaction with TRAF6 and attenuation of NF-kappa-B activation. May negatively regulate the RLH pathway downstream from MAVS and upstream of NF-kappa-B and IRF3. The polypeptide is TRAF-type zinc finger domain-containing protein 1 (Trafd1) (Mus musculus (Mouse)).